The primary structure comprises 428 residues: 3-phosphoshikimate 1-carboxyvinyltransferase (428 aa).

Residues Lys21, Ser22, and Arg26 each coordinate 3-phosphoshikimate. Lys21 lines the phosphoenolpyruvate pocket. Phosphoenolpyruvate contacts are provided by Gly91 and Arg119. Residues Ser164, Gln166, Asp313, and Lys340 each coordinate 3-phosphoshikimate. Residue Gln166 participates in phosphoenolpyruvate binding. Asp313 (proton acceptor) is an active-site residue. 2 residues coordinate phosphoenolpyruvate: Arg344 and Arg386.

It belongs to the EPSP synthase family. In terms of assembly, monomer.

It is found in the cytoplasm. It catalyses the reaction 3-phosphoshikimate + phosphoenolpyruvate = 5-O-(1-carboxyvinyl)-3-phosphoshikimate + phosphate. The protein operates within metabolic intermediate biosynthesis; chorismate biosynthesis; chorismate from D-erythrose 4-phosphate and phosphoenolpyruvate: step 6/7. Catalyzes the transfer of the enolpyruvyl moiety of phosphoenolpyruvate (PEP) to the 5-hydroxyl of shikimate-3-phosphate (S3P) to produce enolpyruvyl shikimate-3-phosphate and inorganic phosphate. The polypeptide is 3-phosphoshikimate 1-carboxyvinyltransferase (Campylobacter jejuni subsp. jejuni serotype O:2 (strain ATCC 700819 / NCTC 11168)).